Reading from the N-terminus, the 188-residue chain is ATP synthase subunit b (188 aa).

Residues 21–41 (ILPHLGELIVGIIFAIIIYAV) form a helical membrane-spanning segment.

The protein belongs to the ATPase B chain family. In terms of assembly, F-type ATPases have 2 components, F(1) - the catalytic core - and F(0) - the membrane proton channel. F(1) has five subunits: alpha(3), beta(3), gamma(1), delta(1), epsilon(1). F(0) has three main subunits: a(1), b(2) and c(10-14). The alpha and beta chains form an alternating ring which encloses part of the gamma chain. F(1) is attached to F(0) by a central stalk formed by the gamma and epsilon chains, while a peripheral stalk is formed by the delta and b chains.

Its subcellular location is the cell membrane. Functionally, f(1)F(0) ATP synthase produces ATP from ADP in the presence of a proton or sodium gradient. F-type ATPases consist of two structural domains, F(1) containing the extramembraneous catalytic core and F(0) containing the membrane proton channel, linked together by a central stalk and a peripheral stalk. During catalysis, ATP synthesis in the catalytic domain of F(1) is coupled via a rotary mechanism of the central stalk subunits to proton translocation. Its function is as follows. Component of the F(0) channel, it forms part of the peripheral stalk, linking F(1) to F(0). This Kineococcus radiotolerans (strain ATCC BAA-149 / DSM 14245 / SRS30216) protein is ATP synthase subunit b.